Consider the following 2883-residue polypeptide: Desmoplakin (2883 aa).

Positions 1-21 are disordered; it reads MSCNGGSHPRINTLGRMTRAE. An interaction with PKP1, JUP, PKP2 region spans residues 1–596; it reads MSCNGGSHPR…DYMKTIEDLE (596 aa). Residues 1–1068 form a globular 1 region; the sequence is MSCNGGSHPR…ANSENCNKNK (1068 aa). The residue at position 22 (Ser-22) is a Phosphoserine. Thr-59 carries the phosphothreonine modification. Phosphoserine is present on Ser-65. Tyr-68 bears the Phosphotyrosine mark. The residue at position 73 (Thr-73) is a Phosphothreonine. Ser-177, Ser-178, and Ser-188 each carry phosphoserine. 2 Spectrin repeats span residues 190–283 and 284–387; these read SGWD…HLRQ and LQNI…LKEN. A Spectrin 3a repeat occupies 388-458; that stretch reads AAYFQFFEEA…NLVNKSKKIV (71 aa). The SH3 domain occupies 470-527; that stretch reads NKPIILRALCDYKQDQKIVHKGDECILKDNNERSKWYVTGPGGVDMLVPSVGLIIPPP. The Spectrin 3b repeat unit spans residues 528–557; that stretch reads NPLAVDLSCKIEQYYEAILALWNQLYINMK. Spectrin repeat units lie at residues 558–639, 666–781, and 782–895; these read SLVS…IQLP, VIET…SLCS, and VRAL…DLEK. Residues 1034–1956 are a coiled coil; sequence KSLEDLKLKN…LQKEIEKLRQ (923 aa). Positions 1069 to 1957 are central fibrous rod domain; it reads FLDQNLQKYQ…QKEIEKLRQR (889 aa). Residues Ser-1670, Ser-1720, and Ser-2036 each carry the phosphoserine modification. The segment at 1958–2882 is globular 2; that stretch reads PYGSHRETQT…YSFSSSSIGG (925 aa). The 4.5 X 38 AA tandem repeats (Domain A) stretch occupies residues 1972-2220; sequence TVDSSKLVFD…LLLSVQKRSM (249 aa). 17 Plectin repeats span residues 2021 to 2057, 2058 to 2095, 2096 to 2133, 2134 to 2171, 2175 to 2209, 2210 to 2245, 2263 to 2300, 2301 to 2338, 2339 to 2376, 2377 to 2414, 2418 to 2452, 2468 to 2505, 2519 to 2556, 2622 to 2659, 2660 to 2697, 2736 to 2773, and 2774 to 2811; these read QPFL…PEST, VMLL…FDDR, QQIY…RETG, MRLL…RDLY, NDPR…PHTG, LLLL…PSTV, KDFL…PGTA, LELL…IEFK, EKLL…KGHG, IRLL…EELS, SDPS…EETG, SQKN…YDTF, TITG…RKFF, SDPL…SITG, QRLL…QDMA, QRFL…GRAA, and QRLQ…DITG. 3 positions are modified to phosphoserine: Ser-2219, Ser-2221, and Ser-2237. Residues 2256–2458 are 4.5 X 38 AA tandem repeats (Domain B); sequence DEVGERIKDF…EETGLCLLPL (203 aa). The Omega-hydroxyceramide glutamate ester moiety is linked to residue Gln-2492. Residues 2621-2833 form a 4.5 X 38 AA tandem repeats (Domain C) region; sequence LSDPLEESSP…GLPSPYNMSA (213 aa). Phosphoserine is present on residues Ser-2822 and Ser-2827. Residues 2822–2883 are disordered; it reads SKGLPSPYNM…SFSSSSIGGY (62 aa). A Phosphotyrosine modification is found at Tyr-2829. Phosphoserine occurs at positions 2832 and 2836. A 6 X 4 AA tandem repeats of G-S-R-[SR] region spans residues 2835–2858; that stretch reads GSRSGSRSGSRSGSRSGSRSGSRR. Positions 2835-2858 are enriched in low complexity; sequence GSRSGSRSGSRSGSRSGSRSGSRR. Omega-N-methylarginine is present on residues Arg-2837 and Arg-2858. Phosphoserine is present on Ser-2860. Thr-2864 is subject to Phosphothreonine. A compositionally biased stretch (low complexity) spans 2867 to 2883; that stretch reads SSYSYSYSFSSSSIGGY. Ser-2879 is modified (phosphoserine).

Belongs to the plakin or cytolinker family. Homodimer. Interacts with COL17A1 (via cytoplasmic region). Interacts with DSC2. Interacts with PKP1. Interacts with PKP2. Interacts weakly with TMEM65. Phosphorylation at Ser-2860 increases association with intermediate filament cytokeratin, potentially facilitating interaction between desmosome junctions and intermediate filament architecture. Expressed in undifferentiated keratinocytes of the epidermis at birth, expression increases as differentiation proceeds (at protein level). Abundantly expressed in the suprabasal layers and weakly in the basal layers of the outer hair root sheath (at protein level). Expressed at intercalated disks in cardiomyocytes (at protein level).

It localises to the cell junction. Its subcellular location is the desmosome. The protein localises to the cell membrane. The protein resides in the cytoplasm. Its function is as follows. Major high molecular weight protein of desmosomes. Regulates profibrotic gene expression in cardiomyocytes via activation of the MAPK14/p38 MAPK signaling cascade and increase in TGFB1 protein abundance. In Mus musculus (Mouse), this protein is Desmoplakin.